The sequence spans 488 residues: uncharacterized protein (488 aa).

12 helical membrane-spanning segments follow: residues 2–22 (FGLPIPIIGLLIAVFVLVFLV), 27–47 (VHAFIAMLIAASIAGLVGGMS), 59–79 (FGGTLGSIGIVIGLGVMMGSV), 106–126 (LAITGYVVSIPIFVDSAFVIL), 176–196 (IGAMLLTGMCMAFLPVVGIVL), 241–261 (LLPIVLPIVLIFIKAVVHLFV), 275–295 (IVSFLGHPVIVLALSVLISVY), 314–334 (VKTAGIILLVTGAGGALGAVL), 347–367 (IANLPISPILIPFIVSTLVRF), 368–388 (IQGSGTVAMITAASISSPILA), 438–458 (VPTTIAWGIGGISVILANLIF), and 461–481 (DGSVFDLLFPVVVLASILFYI).

The protein belongs to the GntP permease family.

It is found in the cell inner membrane. This is an uncharacterized protein from Haemophilus influenzae (strain ATCC 51907 / DSM 11121 / KW20 / Rd).